We begin with the raw amino-acid sequence, 594 residues long: MSSGLPSIAATAQPSANGFSFNNGFPPFGIYYSQLPPVNSNGSTPNSSNRFKVKRHRQRVDAGEPRNTYQGASTSVSSNSSSSSSTSNTNSTPSSSSTSSKKSTEGMTETETMTASIEQEKVIQNEESEAGKDGMEEHDDGMNDFEIIDDTNDEVEESEERESPESNSSSASKRKSFQPQKIGEELGIEFGDETEQINVTVGGTEEAEETTDEAEGRELSALQAQLQNGHIAEQQRRFYAAFLDQQRKQVAAAQILHNGKINIERLVSSVKGDLVTNFMKDLEKVIRDWAADEVLKQEAAAPPQIPQPPPQFHPIFPANPLFHMAPPHHPVAGGGIFPPNFNAFNAFNALRRNLQDVDTSSEMKKKRTKVEIKKEDAMSSRASPLSASASPPLSRFFPAPTMVGHYGGMNFGDREDSPTNSDELSECGYEGGGSSSMLTPMHLRKAKLMFFYTRYPNSNLLKSYFPDIRFNKNNTAQLVKWFSNFREFYYNQMEKFARQALAEGITDRNDIFVSKDSELFKVLNTHYNRNNHIKAPDRLVFVVQETLREFHDAIKQGKDIEPSWKKTIYKVINRLEDQIPDFFKEPNFLERLET.

Composition is skewed to polar residues over residues 1 to 13 (MSSG…ATAQ) and 36 to 50 (PPVN…SSNR). Disordered regions lie at residues 1–20 (MSSG…NGFS), 30–180 (IYYS…FQPQ), and 358–389 (DTSS…SASA). Over residues 73-101 (STSVSSNSSSSSSTSNTNSTPSSSSTSSK) the composition is skewed to low complexity. Polar residues predominate over residues 105 to 117 (EGMTETETMTASI). Residues 118 to 135 (EQEKVIQNEESEAGKDGM) are compositionally biased toward basic and acidic residues. A compositionally biased stretch (acidic residues) spans 136-162 (EEHDDGMNDFEIIDDTNDEVEESEERE). Basic and acidic residues predominate over residues 369–378 (KVEIKKEDAM). Low complexity predominate over residues 379–389 (SSRASPLSASA). Positions 435 to 493 (SSMLTPMHLRKAKLMFFYTRYPNSNLLKSYFPDIRFNKNNTAQLVKWFSNFREFYYNQM) constitute a Prospero-type homeo domain. A homeo-Prospero region spans residues 435 to 593 (SSMLTPMHLR…KEPNFLERLE (159 aa)). The Prospero domain maps to 494–593 (EKFARQALAE…KEPNFLERLE (100 aa)).

This sequence belongs to the Prospero homeodomain family.

The protein resides in the nucleus. Transcription factor involved in developmental processes. Controls the transcription of genes required for excretory canal formation. The sequence is that of Homeobox protein prospero homolog 1 from Caenorhabditis elegans.